We begin with the raw amino-acid sequence, 509 residues long: Heat shock 70 kDa protein 14 (509 aa).

It belongs to the heat shock protein 70 family. As to quaternary structure, component of ribosome-associated complex (RAC), a heterodimer composed of Hsp70/DnaK-type chaperone HSPA14 and Hsp40/DnaJ-type chaperone DNAJC2.

Its subcellular location is the cytoplasm. It is found in the cytosol. Component of the ribosome-associated complex (RAC), a complex involved in folding or maintaining nascent polypeptides in a folding-competent state. In the RAC complex, binds to the nascent polypeptide chain, while DNAJC2 stimulates its ATPase activity. The polypeptide is Heat shock 70 kDa protein 14 (HSPA14) (Macaca fascicularis (Crab-eating macaque)).